Consider the following 142-residue polypeptide: uncharacterized protein (142 aa).

2 consecutive transmembrane segments (helical) span residues 75–97 (VFFRKISFFTPLYFLLLSPYIVA) and 107–124 (LSIVLPVAVLYFSAKLFY).

It is found in the cell membrane. This is an uncharacterized protein from Archaeoglobus fulgidus (strain ATCC 49558 / DSM 4304 / JCM 9628 / NBRC 100126 / VC-16).